Consider the following 214-residue polypeptide: Threonylcarbamoyl-AMP synthase (214 aa).

The region spanning T9 to R214 is the YrdC-like domain.

This sequence belongs to the SUA5 family. TsaC subfamily.

It is found in the cytoplasm. The catalysed reaction is L-threonine + hydrogencarbonate + ATP = L-threonylcarbamoyladenylate + diphosphate + H2O. In terms of biological role, required for the formation of a threonylcarbamoyl group on adenosine at position 37 (t(6)A37) in tRNAs that read codons beginning with adenine. Catalyzes the conversion of L-threonine, HCO(3)(-)/CO(2) and ATP to give threonylcarbamoyl-AMP (TC-AMP) as the acyladenylate intermediate, with the release of diphosphate. The chain is Threonylcarbamoyl-AMP synthase from Psychrobacter cryohalolentis (strain ATCC BAA-1226 / DSM 17306 / VKM B-2378 / K5).